The following is a 343-amino-acid chain: MIKLTHISKVFQQGSRTITALSDVSLHVPAGQIYGVIGASGAGKSTLIRCANMLERPTSGQVLVDDQDLTTLSEGQLTRARRQIGMIFQHFNLLSSRTVYGNIALPLELDNTSRADIKKRVNELLDLVGLTDKQDAYPANLSGGQKQRVAIARALASNPKVLLCDEATSALDPATTRSILELLKDINRRLGLTILLITHEMDVVKRICDQVAVISEGKLIEKDSVSEVFSHPKTPLAQQFIQSTLHLDIPEDYAKRMSPEPTVDHVPLLKLEFTGKSVDAPLISQAVRRFNIDIGILSSQMDYAGGVKFGVMLAELHGDVQDGLAAIKFLQDHHVKVEVLGYV.

The ABC transporter domain occupies 2 to 241 (IKLTHISKVF…PKTPLAQQFI (240 aa)). 38–45 (GASGAGKS) lines the ATP pocket.

It belongs to the ABC transporter superfamily. Methionine importer (TC 3.A.1.24) family. The complex is composed of two ATP-binding proteins (MetN), two transmembrane proteins (MetI) and a solute-binding protein (MetQ).

It localises to the cell inner membrane. It catalyses the reaction L-methionine(out) + ATP + H2O = L-methionine(in) + ADP + phosphate + H(+). It carries out the reaction D-methionine(out) + ATP + H2O = D-methionine(in) + ADP + phosphate + H(+). Functionally, part of the ABC transporter complex MetNIQ involved in methionine import. Responsible for energy coupling to the transport system. The sequence is that of Methionine import ATP-binding protein MetN 1 from Yersinia pestis bv. Antiqua (strain Antiqua).